The chain runs to 535 residues: Serum response factor-binding protein 1 (535 aa).

Coiled-coil stretches lie at residues 5 to 27 (LNLNNEVVKLRKDVKKVKVLIIR) and 107 to 177 (LKQK…EKCK). Basic and acidic residues-rich tracts occupy residues 128–151 (AAEGEREREKDEPEQVTKIKETKK), 159–191 (KNTEEIKSAKEHVKEEKCKNLLEDSDKGTEKAL), 205–325 (AENK…ERPV), 361–376 (DKEKEYFDDSTEERFY), 406–432 (SDKDGSKQKEEKVPPTKEKAQTSEVQK), and 460–472 (TKRETNFRQERNK). 2 disordered regions span residues 128-435 (AAEG…KEIP) and 453-535 (TKPK…VFDD).

It localises to the cytoplasm. Its subcellular location is the perinuclear region. May be involved in regulating transcriptional activation of cardiac genes during the aging process. May play a role in biosynthesis and/or processing of SLC2A4 in adipose cells. This Xenopus tropicalis (Western clawed frog) protein is Serum response factor-binding protein 1.